A 171-amino-acid chain; its full sequence is Small ribosomal subunit protein uS5 (171 aa).

Residues 16 to 79 (LREKMISVNR…EEARRKLVKI (64 aa)) enclose the S5 DRBM domain.

It belongs to the universal ribosomal protein uS5 family. Part of the 30S ribosomal subunit. Contacts proteins S4 and S8.

Functionally, with S4 and S12 plays an important role in translational accuracy. Its function is as follows. Located at the back of the 30S subunit body where it stabilizes the conformation of the head with respect to the body. This chain is Small ribosomal subunit protein uS5, found in Thiobacillus denitrificans (strain ATCC 25259 / T1).